The sequence spans 283 residues: MKQYLDLVKHVLENGNQKGDRTGTGTKSVFGYQMRFDLSEGFPMVTTKKLHLKSIIYELLWFLKGDTNIKYLKENGVKIWDEWADSNGDLGPVYGHQWRNWNSEEIDQISELITELKTNPNSRRMIVSAWNPSVLPDTKKSFEENVANNKAALPPCHAFFQFYVASPDLEKGETKGKLSCQLYQRSADIFLGVPFNIASYALLTMMIAQVCDLEPGEFIHTFGDAHIYNNHFEQLELQLSREPKPLPKMILNPEIKNIFDFDYDDFTLVDYDPHPAIQGSVAV.

Residue Arg21 participates in dUMP binding. (6R)-5,10-methylene-5,6,7,8-tetrahydrofolate is bound at residue His51. A dUMP-binding site is contributed by 123–124 (RR). Catalysis depends on Cys156, which acts as the Nucleophile. DUMP is bound by residues 185-188 (RSAD), Asn196, and 226-228 (HIY). Asp188 serves as a coordination point for (6R)-5,10-methylene-5,6,7,8-tetrahydrofolate. Ala282 provides a ligand contact to (6R)-5,10-methylene-5,6,7,8-tetrahydrofolate.

This sequence belongs to the thymidylate synthase family. Bacterial-type ThyA subfamily. As to quaternary structure, homodimer.

It is found in the cytoplasm. The catalysed reaction is dUMP + (6R)-5,10-methylene-5,6,7,8-tetrahydrofolate = 7,8-dihydrofolate + dTMP. The protein operates within pyrimidine metabolism; dTTP biosynthesis. Its function is as follows. Catalyzes the reductive methylation of 2'-deoxyuridine-5'-monophosphate (dUMP) to 2'-deoxythymidine-5'-monophosphate (dTMP) while utilizing 5,10-methylenetetrahydrofolate (mTHF) as the methyl donor and reductant in the reaction, yielding dihydrofolate (DHF) as a by-product. This enzymatic reaction provides an intracellular de novo source of dTMP, an essential precursor for DNA biosynthesis. The chain is Thymidylate synthase from Flavobacterium johnsoniae (strain ATCC 17061 / DSM 2064 / JCM 8514 / BCRC 14874 / CCUG 350202 / NBRC 14942 / NCIMB 11054 / UW101) (Cytophaga johnsonae).